The following is a 114-amino-acid chain: UPF0145 protein Acry_1752 (114 aa).

Belongs to the UPF0145 family.

The sequence is that of UPF0145 protein Acry_1752 from Acidiphilium cryptum (strain JF-5).